The primary structure comprises 256 residues: Membrane-anchored junction protein (256 aa).

The Nuclear portion of the chain corresponds to 1-232 (MSLKPFTYPF…HSSPPPPKEP (232 aa)). Disordered stretches follow at residues 143-197 (KRKL…TPAS) and 211-235 (HGLQ…PGAR). Polar residues predominate over residues 164–173 (ETSSEASSNK). The span at 175-184 (PLKESKRSTD) shows a compositional bias: basic and acidic residues. A helical membrane pass occupies residues 233-251 (GARGFLGFLSALFPFRYFF). Topologically, residues 252–256 (KKSGQ) are perinuclear space.

The protein belongs to the MAJIN family. As to quaternary structure, component of the MAJIN-TERB1-TERB2 complex, composed of MAJIN, TERB1 and TERB2. In terms of tissue distribution, specifically expressed in germline tissues.

The protein resides in the nucleus inner membrane. It localises to the chromosome. It is found in the telomere. In terms of biological role, meiosis-specific telomere-associated protein involved in meiotic telomere attachment to the nucleus inner membrane, a crucial step for homologous pairing and synapsis. Component of the MAJIN-TERB1-TERB2 complex, which promotes telomere cap exchange by mediating attachment of telomeric DNA to the inner nuclear membrane and replacement of the protective cap of telomeric chromosomes: in early meiosis, the MAJIN-TERB1-TERB2 complex associates with telomeric DNA and the shelterin/telosome complex. During prophase, the complex matures and promotes release of the shelterin/telosome complex from telomeric DNA. In the complex, MAJIN acts as the anchoring subunit to the nucleus inner membrane. MAJIN shows DNA-binding activity, possibly for the stabilization of telomere attachment on the nucleus inner membrane. The sequence is that of Membrane-anchored junction protein from Mus musculus (Mouse).